Here is a 78-residue protein sequence, read N- to C-terminus: DNA gyrase inhibitor YacG (78 aa).

Zn(2+) is bound by residues cysteine 7, cysteine 10, cysteine 26, and cysteine 30.

It belongs to the DNA gyrase inhibitor YacG family. Interacts with GyrB. Requires Zn(2+) as cofactor.

In terms of biological role, inhibits all the catalytic activities of DNA gyrase by preventing its interaction with DNA. Acts by binding directly to the C-terminal domain of GyrB, which probably disrupts DNA binding by the gyrase. In Colwellia psychrerythraea (strain 34H / ATCC BAA-681) (Vibrio psychroerythus), this protein is DNA gyrase inhibitor YacG.